Consider the following 216-residue polypeptide: Refilin-B (216 aa).

The disordered stretch occupies residues 1-55; the sequence is MVGRLSLQDVPELVDTKKKGDGVLDSPDSGLPPSPSPSHWGLAATAGGGGERAPV. Residues S6 and S26 each carry the phosphoserine modification.

It belongs to the Refilin family. In terms of assembly, interacts with FLNA and FLNB. In terms of tissue distribution, detected in various tissues, with highest expression in lung, followed by spleen.

The protein localises to the cytoplasm. The protein resides in the cytoskeleton. Its function is as follows. Involved in the regulation of the perinuclear actin network and nuclear shape through interaction with filamins. Plays an essential role in the formation of cartilaginous skeletal elements. This is Refilin-B from Mus musculus (Mouse).